The primary structure comprises 405 residues: Eukaryotic translation initiation factor 5 (405 aa).

27–34 is a GTP binding site; it reads GRGNGIKT. Residues 143–202 are disordered; sequence NPPDSVSGSKKKKKAATASANVRGGGLSISDIAQGKSQNAPSDGTGSSTPQHHDEDEDEL. Phosphoserine is present on residues Ser170 and Ser172. The segment covering 177–192 has biased composition (polar residues); that stretch reads GKSQNAPSDGTGSSTP. Thr191 carries the post-translational modification Phosphothreonine. Residue Ser228 is modified to Phosphoserine. One can recognise a W2 domain in the interval 241 to 402; sequence VNSELTQLDE…ETAESDDDEE (162 aa). A Phosphothreonine modification is found at Thr317. Ser397 carries the post-translational modification Phosphoserine.

This sequence belongs to the eIF-2-beta/eIF-5 family. As to quaternary structure, monomer. The factors eIF-1, eIF-2, eIF-3, TIF5/eIF-5 and methionyl-tRNAi form a multifactor complex (MFC) that may bind to the 40S ribosome. TIF32, NIP1 and TIF5/eIF-5 comprise a minimal 40S-ribosome-binding unit. Interacts with NIP1. Interacts with SUI3.

Its function is as follows. Catalyzes the hydrolysis of GTP bound to the 40S ribosomal initiation complex (40S.mRNA.Met-tRNA[F].eIF-2.GTP) with the subsequent joining of a 60S ribosomal subunit resulting in the release of eIF-2 and the guanine nucleotide. The subsequent joining of a 60S ribosomal subunit results in the formation of a functional 80S initiation complex (80S.mRNA.Met-tRNA[F]). eIF-5 is essential for cell viability. This chain is Eukaryotic translation initiation factor 5 (TIF5), found in Saccharomyces cerevisiae (strain ATCC 204508 / S288c) (Baker's yeast).